The chain runs to 106 residues: Urease subunit beta (106 aa).

It belongs to the urease beta subunit family. As to quaternary structure, heterotrimer of UreA (gamma), UreB (beta) and UreC (alpha) subunits. Three heterotrimers associate to form the active enzyme.

The protein resides in the cytoplasm. The catalysed reaction is urea + 2 H2O + H(+) = hydrogencarbonate + 2 NH4(+). It participates in nitrogen metabolism; urea degradation; CO(2) and NH(3) from urea (urease route): step 1/1. This Synechococcus sp. (strain CC9605) protein is Urease subunit beta.